We begin with the raw amino-acid sequence, 185 residues long: Potassium-transporting ATPase KdpC subunit 2 (185 aa).

Residues 8–28 (LGLVLIMFVLCGFIFPLTVTA) form a helical membrane-spanning segment.

The protein belongs to the KdpC family. As to quaternary structure, the system is composed of three essential subunits: KdpA, KdpB and KdpC.

It is found in the cell membrane. Its subcellular location is the membrane raft. Its function is as follows. Part of the high-affinity ATP-driven potassium transport (or Kdp) system, which catalyzes the hydrolysis of ATP coupled with the electrogenic transport of potassium into the cytoplasm. This subunit acts as a catalytic chaperone that increases the ATP-binding affinity of the ATP-hydrolyzing subunit KdpB by the formation of a transient KdpB/KdpC/ATP ternary complex. The protein is Potassium-transporting ATPase KdpC subunit 2 of Staphylococcus aureus (strain Mu50 / ATCC 700699).